We begin with the raw amino-acid sequence, 154 residues long: Putative nickel-responsive regulator (154 aa).

Ni(2+) is bound by residues His95, His106, His108, and Cys114.

It belongs to the transcriptional regulatory CopG/NikR family. It depends on Ni(2+) as a cofactor.

Its function is as follows. Transcriptional regulator. The protein is Putative nickel-responsive regulator of Caldanaerobacter subterraneus subsp. tengcongensis (strain DSM 15242 / JCM 11007 / NBRC 100824 / MB4) (Thermoanaerobacter tengcongensis).